Consider the following 342-residue polypeptide: Delta(6)-protoilludene synthase 8 (342 aa).

Asp81 lines the Mg(2+) pocket. The DDXXD motif motif lies at 93 to 97 (RDMVD). Mg(2+) contacts are provided by Asn217, Ser221, and Glu225. The NSE/DTE motif signature appears at 217–225 (NDLVSYNRE). Residues Arg305 and Tyr306 each coordinate (2E,6E)-farnesyl diphosphate.

It belongs to the terpene synthase family. Requires Mg(2+) as cofactor.

It carries out the reaction (2E,6E)-farnesyl diphosphate = Delta(6)-protoilludene + diphosphate. Functionally, terpene cyclase that catalyzes the cyclization of farnesyl diphosphate (FPP) to delta(6)-protoilludene. In Postia placenta (strain ATCC 44394 / Madison 698-R) (Brown rot fungus), this protein is Delta(6)-protoilludene synthase 8.